The sequence spans 177 residues: Bifunctional protein PyrR (177 aa).

Residues 99-111 (VILIDDVLYTGRT) carry the PRPP-binding motif.

It belongs to the purine/pyrimidine phosphoribosyltransferase family. PyrR subfamily. Homodimer and homohexamer; in equilibrium.

It catalyses the reaction UMP + diphosphate = 5-phospho-alpha-D-ribose 1-diphosphate + uracil. Its function is as follows. Regulates transcriptional attenuation of the pyrimidine nucleotide (pyr) operon by binding in a uridine-dependent manner to specific sites on pyr mRNA. This disrupts an antiterminator hairpin in the RNA and favors formation of a downstream transcription terminator, leading to a reduced expression of downstream genes. Functionally, also displays a weak uracil phosphoribosyltransferase activity which is not physiologically significant. The sequence is that of Bifunctional protein PyrR from Pediococcus pentosaceus (strain ATCC 25745 / CCUG 21536 / LMG 10740 / 183-1w).